We begin with the raw amino-acid sequence, 622 residues long: uncharacterized protein (622 aa).

Residues 157–166 (LKESPLRDQQ) are compositionally biased toward basic and acidic residues. The disordered stretch occupies residues 157–238 (LKESPLRDQQ…GLPDHNSISE (82 aa)).

This is an uncharacterized protein from Homo sapiens (Human).